A 226-amino-acid polypeptide reads, in one-letter code: Clarin-3 (226 aa).

A helical transmembrane segment spans residues 8–28 (LMFLSGFLTSLGSVVVICSIL). An N-linked (GlcNAc...) asparagine glycan is attached at Asn46. The next 3 helical transmembrane spans lie at 92–112 (VVIL…VFTF), 128–148 (GVYT…VLFV), and 181–201 (FWLT…IIFY).

Belongs to the clarin family.

Its subcellular location is the membrane. In Mus musculus (Mouse), this protein is Clarin-3 (Clrn3).